Consider the following 259-residue polypeptide: tRNA pseudouridine synthase A (259 aa).

Catalysis depends on Asp-51, which acts as the Nucleophile. Tyr-109 serves as a coordination point for substrate.

It belongs to the tRNA pseudouridine synthase TruA family. In terms of assembly, homodimer.

It catalyses the reaction uridine(38/39/40) in tRNA = pseudouridine(38/39/40) in tRNA. Its function is as follows. Formation of pseudouridine at positions 38, 39 and 40 in the anticodon stem and loop of transfer RNAs. The protein is tRNA pseudouridine synthase A of Colwellia psychrerythraea (strain 34H / ATCC BAA-681) (Vibrio psychroerythus).